Reading from the N-terminus, the 400-residue chain is MSDDLRRKIALSQFERAKNVLDATFQEAYEDDENDGDALGSLPSFNGQSNRNRKYTGKTGSTTDRISSKEKSSLPTWSDFFDNKELVSLPDRDLDVNTYYTLPTSLLSNTTSIPIFIFHHGAGSSGLSFANLAKELNTKLEGRCGCFAFDARGHAETKFKKADAPICFDRDSFIKDFVSLLNYWFKSKISQEPLQKVSVILIGHSLGGSICTFAYPKLSTELQKKILGITMLDIVEEAAIMALNKVEHFLQNTPNVFESINDAVDWHVQHALSRLRSSAEIAIPALFAPLKSGKVVRITNLKTFSPFWDTWFTDLSHSFVGLPVSKLLILAGNENLDKELIVGQMQGKYQLVVFQDSGHFIQEDSPIKTAITLIDFWKRNDSRNVVIKTNWGQHKTVQNT.

Residues 32–70 (DENDGDALGSLPSFNGQSNRNRKYTGKTGSTTDRISSKE) form a disordered region. The 252-residue stretch at 114–365 (PIFIFHHGAG…DSGHFIQEDS (252 aa)) folds into the AB hydrolase-1 domain. Catalysis depends on residues Ser205, Asp233, and His359.

The protein belongs to the AB hydrolase superfamily. In terms of assembly, interacts with and inactivates the phosphatase PP2A-like catalytic subunits PPG1, PPH21, PPH22, PPH3 and SIT4.

The catalysed reaction is [phosphatase 2A protein]-C-terminal L-leucine methyl ester + H2O = [phosphatase 2A protein]-C-terminal L-leucine + methanol + H(+). Demethylates proteins that have been reversibly carboxymethylated. Demethylates the phosphatase PP2A catalytic subunits PPH21 and PPH22. Forms inactive complexes (PP2Ai) with phosphatase PP2A-like catalytic subunits. Involved in the regulation of cell cycle progression at START. This is Protein phosphatase methylesterase 1 (PPE1) from Saccharomyces cerevisiae (strain ATCC 204508 / S288c) (Baker's yeast).